A 417-amino-acid polypeptide reads, in one-letter code: Gamma-glutamyl phosphate reductase (417 aa).

Belongs to the gamma-glutamyl phosphate reductase family.

Its subcellular location is the cytoplasm. It catalyses the reaction L-glutamate 5-semialdehyde + phosphate + NADP(+) = L-glutamyl 5-phosphate + NADPH + H(+). Its pathway is amino-acid biosynthesis; L-proline biosynthesis; L-glutamate 5-semialdehyde from L-glutamate: step 2/2. In terms of biological role, catalyzes the NADPH-dependent reduction of L-glutamate 5-phosphate into L-glutamate 5-semialdehyde and phosphate. The product spontaneously undergoes cyclization to form 1-pyrroline-5-carboxylate. The sequence is that of Gamma-glutamyl phosphate reductase from Hydrogenovibrio crunogenus (strain DSM 25203 / XCL-2) (Thiomicrospira crunogena).